Consider the following 181-residue polypeptide: Small ribosomal subunit protein bS16 (181 aa).

The interval 150-181 (KKAAEEAAKAAAEAPAEEAAPAEETATEAAAE) is disordered. A compositionally biased stretch (low complexity) spans 158-181 (KAAAEAPAEEAAPAEETATEAAAE).

This sequence belongs to the bacterial ribosomal protein bS16 family.

The sequence is that of Small ribosomal subunit protein bS16 from Bacteroides fragilis (strain YCH46).